Reading from the N-terminus, the 345-residue chain is Alpha-N-acetylneuraminide alpha-2,8-sialyltransferase (345 aa).

Over 1–15 (MKLQGSRMWLCPRTR) the chain is Cytoplasmic. The chain crosses the membrane as a helical; Signal-anchor for type II membrane protein span at residues 16-36 (LPVGASALGFLILCWLYVFPG). At 37-345 (YRLPGHKEMV…KKDVSSQKPH (309 aa)) the chain is on the lumenal side. N-linked (GlcNAc...) asparagine glycosylation is found at Asn59 and Asn107. Disulfide bonds link Cys126–Cys275 and Cys140–Cys335. Residues Asn131 and Asn154 each contribute to the CMP-N-acetyl-beta-neuraminate site. Substrate-binding positions include Asn154 and 176–178 (NPS). Asn233 is a glycosylation site (N-linked (GlcNAc...) asparagine). 5 residues coordinate CMP-N-acetyl-beta-neuraminate: Ser262, Thr263, Gly264, Trp284, and His298. Position 262-264 (262-264 (STG)) interacts with substrate. The active-site Proton donor/acceptor is the His310.

This sequence belongs to the glycosyltransferase 29 family.

The protein localises to the golgi apparatus membrane. It catalyses the reaction an N-acetyl-alpha-neuraminyl-(2-&gt;3)-beta-D-galactosyl derivative + CMP-N-acetyl-beta-neuraminate = an N-acetyl-alpha-neuraminyl-(2-&gt;8)-N-acetyl-alpha-neuraminyl-(2-&gt;3)-beta-D-galactosyl derivative + CMP + H(+). The enzyme catalyses a ganglioside GM3 (d18:1(4E)) + CMP-N-acetyl-beta-neuraminate = a ganglioside GD3 (d18:1(4E)) + CMP + H(+). It carries out the reaction a ganglioside GD3 (d18:1(4E)) + CMP-N-acetyl-beta-neuraminate = a ganglioside GT3 (d18:1(4E)) + CMP + H(+). The catalysed reaction is a ganglioside GD1a (d18:1(4E)) + CMP-N-acetyl-beta-neuraminate = a ganglioside GT1a (d18:1(4E)) + CMP + H(+). It catalyses the reaction a ganglioside GT1b (d18:1(4E)) + CMP-N-acetyl-beta-neuraminate = a ganglioside GQ1b (d18:1(4E)) + CMP + H(+). The enzyme catalyses a ganglioside GM1b (d18:1(4E)) + CMP-N-acetyl-beta-neuraminate = a ganglioside GD1c (d18:1(4E)) + CMP + H(+). It carries out the reaction a ganglioside GD3 + CMP-N-acetyl-beta-neuraminate = a ganglioside GT3 + CMP + H(+). The catalysed reaction is [alpha-N-acetylneuraminyl-(2-&gt;8)](n)-alpha-N-acetylneuraminyl-(2-&gt;8)-alpha-N-acetylneuraminyl-(2-&gt;3)-beta-D-galactosyl-(1-&gt;4)-beta-D-glucosyl-(1&lt;-&gt;1)-ceramide + CMP-N-acetyl-beta-neuraminate = [alpha-N-acetylneuraminyl-(2-&gt;8)](n+1)-alpha-N-acetylneuraminyl-(2-&gt;8)-alpha-N-acetylneuraminyl-(2-&gt;3)-beta-D-galactosyl-(1-&gt;4)-beta-D-glucosyl-(1&lt;-&gt;1)-ceramide + CMP + H(+). It participates in protein modification; protein glycosylation. The protein operates within lipid metabolism; sphingolipid metabolism. Its function is as follows. Catalyzes the addition of sialic acid in alpha 2,8-linkage to the sialic acid moiety of the ganglioside GM3 to form ganglioside GD3; gangliosides are a subfamily of complex glycosphingolipds that contain one or more residues of sialic acid. Glycosphingolipids are required for convergence extension movements during early development. Can catalyze the addition of a second alpha-2,8- sialic acid to GD3 to form GT3. Can use GM1b, GD1a and GT1b as acceptor substrates to synthesize GD1c, GT1a and GQ1b respectively. This is Alpha-N-acetylneuraminide alpha-2,8-sialyltransferase from Xenopus tropicalis (Western clawed frog).